The chain runs to 210 residues: tRNA (guanine-N(7)-)-methyltransferase (210 aa).

S-adenosyl-L-methionine is bound by residues Glu-36, Glu-61, Asp-90, and Asp-112. Asp-112 is a catalytic residue. Residues Lys-116, Asp-148, and 188–191 (TEYE) contribute to the substrate site.

The protein belongs to the class I-like SAM-binding methyltransferase superfamily. TrmB family.

The enzyme catalyses guanosine(46) in tRNA + S-adenosyl-L-methionine = N(7)-methylguanosine(46) in tRNA + S-adenosyl-L-homocysteine. It participates in tRNA modification; N(7)-methylguanine-tRNA biosynthesis. Functionally, catalyzes the formation of N(7)-methylguanine at position 46 (m7G46) in tRNA. The sequence is that of tRNA (guanine-N(7)-)-methyltransferase from Mycoplasma pneumoniae (strain ATCC 29342 / M129 / Subtype 1) (Mycoplasmoides pneumoniae).